The chain runs to 967 residues: RNA polymerase-associated protein RapA (967 aa).

Positions 163–333 (EVGQRHAPRV…FARLRLLDPN (171 aa)) constitute a Helicase ATP-binding domain. 176-183 (DEVGLGKT) serves as a coordination point for ATP. The DEAH box motif lies at 279–282 (DEAH). The 189-residue stretch at 489 to 677 (RVEWLLNYLT…TCRQQHDSLK (189 aa)) folds into the Helicase C-terminal domain.

It belongs to the SNF2/RAD54 helicase family. RapA subfamily. In terms of assembly, interacts with the RNAP. Has a higher affinity for the core RNAP than for the holoenzyme. Its ATPase activity is stimulated by binding to RNAP.

Functionally, transcription regulator that activates transcription by stimulating RNA polymerase (RNAP) recycling in case of stress conditions such as supercoiled DNA or high salt concentrations. Probably acts by releasing the RNAP, when it is trapped or immobilized on tightly supercoiled DNA. Does not activate transcription on linear DNA. Probably not involved in DNA repair. The chain is RNA polymerase-associated protein RapA from Pectobacterium atrosepticum (strain SCRI 1043 / ATCC BAA-672) (Erwinia carotovora subsp. atroseptica).